Consider the following 257-residue polypeptide: Nickel import system ATP-binding protein NikD (257 aa).

Positions 4–245 (IDIQNLTIKN…HLHPYTERLI (242 aa)) constitute an ABC transporter domain. 37–44 (GESGAGKS) contacts ATP.

It belongs to the ABC transporter superfamily. As to quaternary structure, the complex is composed of two ATP-binding proteins (NikD and NikE), two transmembrane proteins (NikB and NikC) and a solute-binding protein (NikA).

It is found in the cell membrane. It catalyses the reaction Ni(2+)(out) + ATP + H2O = Ni(2+)(in) + ADP + phosphate + H(+). Functionally, part of the ABC transporter complex NikABCDE (Opp2) involved in nickel import. Probably responsible for energy coupling to the transport system. The sequence is that of Nickel import system ATP-binding protein NikD from Staphylococcus aureus (strain MSSA476).